Here is a 235-residue protein sequence, read N- to C-terminus: Aspartate/glutamate leucyltransferase (235 aa).

This sequence belongs to the R-transferase family. Bpt subfamily.

The protein resides in the cytoplasm. The enzyme catalyses N-terminal L-glutamyl-[protein] + L-leucyl-tRNA(Leu) = N-terminal L-leucyl-L-glutamyl-[protein] + tRNA(Leu) + H(+). It carries out the reaction N-terminal L-aspartyl-[protein] + L-leucyl-tRNA(Leu) = N-terminal L-leucyl-L-aspartyl-[protein] + tRNA(Leu) + H(+). In terms of biological role, functions in the N-end rule pathway of protein degradation where it conjugates Leu from its aminoacyl-tRNA to the N-termini of proteins containing an N-terminal aspartate or glutamate. The polypeptide is Aspartate/glutamate leucyltransferase (Pseudomonas fluorescens (strain SBW25)).